A 491-amino-acid chain; its full sequence is UDP-N-acetylmuramate--L-alanine ligase (491 aa).

Residue Gly126–Thr132 coordinates ATP.

It belongs to the MurCDEF family.

It is found in the cytoplasm. It catalyses the reaction UDP-N-acetyl-alpha-D-muramate + L-alanine + ATP = UDP-N-acetyl-alpha-D-muramoyl-L-alanine + ADP + phosphate + H(+). It participates in cell wall biogenesis; peptidoglycan biosynthesis. Its function is as follows. Cell wall formation. The sequence is that of UDP-N-acetylmuramate--L-alanine ligase from Yersinia enterocolitica serotype O:8 / biotype 1B (strain NCTC 13174 / 8081).